Consider the following 663-residue polypeptide: Bifunctional polymyxin resistance protein ArnA (663 aa).

The formyltransferase ArnAFT stretch occupies residues 1–304 (MKAVVFAYHD…ELGLVAGMRL (304 aa)). H104 functions as the Proton donor; for formyltransferase activity in the catalytic mechanism. (6R)-10-formyltetrahydrofolate-binding positions include R114 and 136-140 (TMRPD). Positions 316-663 (RLTRVLILGV…GAVSTGVEHD (348 aa)) are dehydrogenase ArnADH. NAD(+)-binding positions include D349 and 370-371 (DI). UDP-alpha-D-glucuronate-binding positions include A395, Y400, and 434–435 (TS). Catalysis depends on E436, which acts as the Proton acceptor; for decarboxylase activity. Residues R462, N494, 528-537 (QLVDGGAQKR), and Y615 contribute to the UDP-alpha-D-glucuronate site. R621 (proton donor; for decarboxylase activity) is an active-site residue.

The protein in the N-terminal section; belongs to the Fmt family. UDP-L-Ara4N formyltransferase subfamily. In the C-terminal section; belongs to the NAD(P)-dependent epimerase/dehydratase family. UDP-glucuronic acid decarboxylase subfamily. Homohexamer, formed by a dimer of trimers.

It catalyses the reaction UDP-alpha-D-glucuronate + NAD(+) = UDP-beta-L-threo-pentopyranos-4-ulose + CO2 + NADH. The enzyme catalyses UDP-4-amino-4-deoxy-beta-L-arabinose + (6R)-10-formyltetrahydrofolate = UDP-4-deoxy-4-formamido-beta-L-arabinose + (6S)-5,6,7,8-tetrahydrofolate + H(+). It participates in nucleotide-sugar biosynthesis; UDP-4-deoxy-4-formamido-beta-L-arabinose biosynthesis; UDP-4-deoxy-4-formamido-beta-L-arabinose from UDP-alpha-D-glucuronate: step 1/3. It functions in the pathway nucleotide-sugar biosynthesis; UDP-4-deoxy-4-formamido-beta-L-arabinose biosynthesis; UDP-4-deoxy-4-formamido-beta-L-arabinose from UDP-alpha-D-glucuronate: step 3/3. The protein operates within bacterial outer membrane biogenesis; lipopolysaccharide biosynthesis. Its function is as follows. Bifunctional enzyme that catalyzes the oxidative decarboxylation of UDP-glucuronic acid (UDP-GlcUA) to UDP-4-keto-arabinose (UDP-Ara4O) and the addition of a formyl group to UDP-4-amino-4-deoxy-L-arabinose (UDP-L-Ara4N) to form UDP-L-4-formamido-arabinose (UDP-L-Ara4FN). The modified arabinose is attached to lipid A and is required for resistance to polymyxin and cationic antimicrobial peptides. This chain is Bifunctional polymyxin resistance protein ArnA, found in Aeromonas salmonicida (strain A449).